Here is a 202-residue protein sequence, read N- to C-terminus: LexA repressor (202 aa).

The H-T-H motif DNA-binding region spans 28–48 (RAEIAAQLGFRSPNAAEEHLK). Catalysis depends on for autocatalytic cleavage activity residues Ser119 and Lys156.

Belongs to the peptidase S24 family. Homodimer.

The catalysed reaction is Hydrolysis of Ala-|-Gly bond in repressor LexA.. Functionally, represses a number of genes involved in the response to DNA damage (SOS response), including recA and lexA. Binds to the 16 bp palindromic sequence 5'-CTGTATATATATACAG-3'. In the presence of single-stranded DNA, RecA interacts with LexA causing an autocatalytic cleavage which disrupts the DNA-binding part of LexA, leading to derepression of the SOS regulon and eventually DNA repair. This chain is LexA repressor, found in Erwinia tasmaniensis (strain DSM 17950 / CFBP 7177 / CIP 109463 / NCPPB 4357 / Et1/99).